We begin with the raw amino-acid sequence, 402 residues long: Serine/threonine-protein kinase US3 homolog (402 aa).

Disordered regions lie at residues 1 to 21 (MSST…KVHD) and 46 to 88 (FPDS…SPET). The Protein kinase domain maps to 102 to 386 (YNIVSSLPPG…AQDILMLPLF (285 aa)). ATP is bound by residues 110–118 (PGSEGYIYV) and lysine 127. Aspartate 218 functions as the Proton acceptor in the catalytic mechanism.

It belongs to the protein kinase superfamily. Ser/Thr protein kinase family. Phosphorylated by UL13 homolog; this phosphorylation regulates subsequent phosphorylation of UL31 and UL34 homologs by US3. Autophosphorylated.

It is found in the host cytoplasm. The protein localises to the host nucleus. The enzyme catalyses L-seryl-[protein] + ATP = O-phospho-L-seryl-[protein] + ADP + H(+). The catalysed reaction is L-threonyl-[protein] + ATP = O-phospho-L-threonyl-[protein] + ADP + H(+). Functionally, multifunctional serine/threonine kinase that plays a role in several processes including egress of virus particles from the nucleus, modulation of the actin cytoskeleton and inhibition of apoptosis. Phosphorylates UL31 and UL34 homologs, two critical regulators of capsid budding from nucleus to endoplasmic reticulum, thereby facilitating virion egress. Modulates and redistributes host components of the nuclear envelope, including LMNA, emerin/EMD and the nuclear matrix protein MATR3. Phosphorylates envelope glycoprotein B (gB), probably to direct it to the cell surface. Promotes virus intracellular spread by restructuring host cell cytoskeleton. Blocks host apoptosis to extend cell survival and allow efficient viral replication. Promotes viral gene expression by phosphorylating host HDAC2 to reduce viral genome silencing. The polypeptide is Serine/threonine-protein kinase US3 homolog (US1206) (Gallid herpesvirus 2 (strain GA) (GaHV-2)).